We begin with the raw amino-acid sequence, 603 residues long: Glutamyl-tRNA(Gln) amidotransferase subunit B, mitochondrial (603 aa).

Residues 1-32 (MIRHRLRLALSAAPVTATGRRTRSKTAPRRSL) constitute a mitochondrion transit peptide. Positions 12-59 (AAPVTATGRRTRSKTAPRRSLSTQQTQSSASSSSNNLDGDGRAFVPLR) are disordered. Residues 31–48 (SLSTQQTQSSASSSSNNL) are compositionally biased toward low complexity.

It belongs to the GatB/GatE family. GatB subfamily. As to quaternary structure, subunit of the heterotrimeric GatCAB amidotransferase (AdT) complex, composed of A, B and C subunits.

It localises to the mitochondrion. It catalyses the reaction L-glutamyl-tRNA(Gln) + L-glutamine + ATP + H2O = L-glutaminyl-tRNA(Gln) + L-glutamate + ADP + phosphate + H(+). Its function is as follows. Allows the formation of correctly charged Gln-tRNA(Gln) through the transamidation of misacylated Glu-tRNA(Gln) in the mitochondria. The reaction takes place in the presence of glutamine and ATP through an activated gamma-phospho-Glu-tRNA(Gln). The sequence is that of Glutamyl-tRNA(Gln) amidotransferase subunit B, mitochondrial from Arthroderma otae (strain ATCC MYA-4605 / CBS 113480) (Microsporum canis).